Reading from the N-terminus, the 201-residue chain is tRNA (guanine-N(7)-)-methyltransferase (201 aa).

Residues Glu-33, Glu-58, Asp-85, and Asp-106 each coordinate S-adenosyl-L-methionine. Asp-106 is an active-site residue. Residues Lys-110, Asp-142, and 180-183 (TTYE) each bind substrate.

This sequence belongs to the class I-like SAM-binding methyltransferase superfamily. TrmB family.

The enzyme catalyses guanosine(46) in tRNA + S-adenosyl-L-methionine = N(7)-methylguanosine(46) in tRNA + S-adenosyl-L-homocysteine. The protein operates within tRNA modification; N(7)-methylguanine-tRNA biosynthesis. Catalyzes the formation of N(7)-methylguanine at position 46 (m7G46) in tRNA. In Mesomycoplasma hyopneumoniae (strain 7448) (Mycoplasma hyopneumoniae), this protein is tRNA (guanine-N(7)-)-methyltransferase.